The sequence spans 114 residues: MVDQNPKRSGEPPVWLMFGAGGTVSAIFFPVVILIIGLLLPFGLVDAHNLITFAYSWIGKLVILVLTIFPMWCGLHRIHHGMHDLKVHVPAGGFIFYGLATIYTVWVLFAVINL.

The next 3 membrane-spanning stretches (helical) occupy residues 24-44 (VSAI…PFGL), 50-70 (LITF…TIFP), and 92-112 (GGFI…FAVI).

The protein belongs to the FrdD family. As to quaternary structure, part of an enzyme complex containing four subunits: a flavoprotein (FrdA), an iron-sulfur protein (FrdB), and two hydrophobic anchor proteins (FrdC and FrdD).

It is found in the cell inner membrane. Functionally, anchors the catalytic components of the fumarate reductase complex to the cell membrane, binds quinones. This Haemophilus influenzae (strain PittEE) protein is Fumarate reductase subunit D.